A 215-amino-acid chain; its full sequence is 16S rRNA (adenine(1408)-N(1))-methyltransferase (215 aa).

S-adenosyl-L-methionine is bound by residues Gly-32, Asp-55, 87–88 (AE), 102–107 (LMPWGS), and 191–193 (TSW).

Belongs to the methyltransferase superfamily. Kanamycin-apramycin resistance family.

It catalyses the reaction adenosine(1408) in 16S rRNA + S-adenosyl-L-methionine = N(1)-methyladenosine(1408) in 16S rRNA + S-adenosyl-L-homocysteine + H(+). Its function is as follows. Specifically methylates the N(1) position of adenine 1408 in 16S rRNA. Confers resistance to various aminoglycosides. The polypeptide is 16S rRNA (adenine(1408)-N(1))-methyltransferase (kamB) (Streptoalloteichus hindustanus).